The primary structure comprises 492 residues: Catalase isozyme 3 (492 aa).

Residues histidine 65 and asparagine 138 contribute to the active site. Tyrosine 348 contributes to the heme binding site.

The protein belongs to the catalase family. As to quaternary structure, homotetramer. The cofactor is heme.

The protein localises to the peroxisome. The catalysed reaction is 2 H2O2 = O2 + 2 H2O. In terms of biological role, occurs in almost all aerobically respiring organisms and serves to protect cells from the toxic effects of hydrogen peroxide. The polypeptide is Catalase isozyme 3 (CAT3) (Nicotiana plumbaginifolia (Leadwort-leaved tobacco)).